A 747-amino-acid polypeptide reads, in one-letter code: Sushi domain-containing protein 1 (747 aa).

An N-terminal signal peptide occupies residues 1–29 (MGRGPWDAGPSRRLLPLLLLLGLARGAAG). Residues 30 to 721 (APGPDGLDVC…WAQVKDSSLM (692 aa)) lie on the Extracellular side of the membrane. Residues 35–72 (GLDVCATCHEHATCQQREGKKICICNYGFVGNGRTQCV) form the EGF-like 1 domain. Disulfide bonds link Cys39–Cys48, Cys42–Cys57, Cys59–Cys71, Cys77–Cys91, and Cys85–Cys100. Residues 73–112 (DKNECQFGATLVCGNHTSCHNTPGGFYCICLEGYRATNNN) enclose the EGF-like 2; calcium-binding domain. 2 N-linked (GlcNAc...) asparagine glycosylation sites follow: Asn87 and Asn112. The region spanning 125–162 (DIDECEVSGLCRHGGRCVNTHGSFECYCMDGYLPRNGP) is the EGF-like 3; calcium-binding domain. 6 disulfides stabilise this stretch: Cys129–Cys141, Cys135–Cys150, Cys179–Cys221, Cys206–Cys234, Cys239–Cys281, and Cys266–Cys294. 2 Sushi domains span residues 177 to 236 (IDCG…HCQE) and 237 to 296 (INCG…TCTE). Asn193 is a glycosylation site (N-linked (GlcNAc...) asparagine). Residue Asn253 is glycosylated (N-linked (GlcNAc...) asparagine). N-linked (GlcNAc...) asparagine glycosylation is found at Asn348, Asn367, and Asn563. The chain crosses the membrane as a helical span at residues 722–742 (LLQMAGVGLGSLAVVIILTFL). Residues 743-747 (SFSAV) are Cytoplasmic-facing.

It is found in the membrane. This is Sushi domain-containing protein 1 (SUSD1) from Homo sapiens (Human).